Reading from the N-terminus, the 768-residue chain is MAGCPKGSWTPRLRSVILGGAQLIWFSALISELVNQKEVAAWTYNYSTKAYSWNNSRVFCRRHFTDLVAIQNKNEIAHLNDVIPFFNSYYWIGIRKINNKWTWVGTNKTLTEEAENWADNEPNNKKNNQDCVEIYIKSNSAPGKWNDEPCFKRKRALCYTASCQDMSCSNQGECIETIGSYTCSCYPGFYGPECEYVKECGKVNIPQHVLMNCSHPLGEFSFNSQCTFSCAEGYELDGPGELQCLASGIWTNNPPKCDAVQCQSLEAPPHGTMACMHPIAAFAYDSSCKFECQPGYRARGSNTLHCTGSGQWSEPLPTCEAIACEPPEIPIHGSMDCVPSTGTFGYNSSCTFLCAEGFVLKGNDAIQCADSGQWTAPAPFCEALQCPEFPVPSKAQVNCSDPFGTLTYQSVCSFSCDEGSLLVGASVIRCLATGHWNGAPPECQAVSCAPMLSPENGSMTCVQPLGNSTYKSTCQFMCDEGFYLSGPERLDCSPSGHWTGTPPTCEAIKCPGIFAPEQGNLDCSHVHGEFGVGSICHFSCNEDFELLGSENVECTVSGRWSAPPPTCKGITSLPAPAVRCPALTTPGQGTMSCQHHLGSFGPNTTCYFGCKTGFTLRGANSLRCRASGQWTAVTPMCRAVKCSELHMDTAVAMNCSNPWGNFSYGSTCTFQCPEGQSLNGSVRATCREDGHWSDAMPTCQAGTLTIQEALTYLGGAVASTTGLAVGGTLLALLRKRLRKKDDGKCPLNPHSHLGTYGVFTNAAYDPTP.

An N-terminal signal peptide occupies residues 1–41 (MAGCPKGSWTPRLRSVILGGAQLIWFSALISELVNQKEVAA). Residues 42–709 (WTYNYSTKAY…QAGTLTIQEA (668 aa)) are Extracellular-facing. Residues 58–158 (VFCRRHFTDL…PCFKRKRALC (101 aa)) form the C-type lectin domain. Cystine bridges form between Cys60–Cys158, Cys131–Cys150, Cys163–Cys174, Cys168–Cys183, Cys185–Cys194, Cys200–Cys244, Cys230–Cys257, Cys262–Cys306, Cys292–Cys319, Cys324–Cys368, Cys354–Cys381, Cys386–Cys430, Cys416–Cys443, Cys448–Cys492, Cys478–Cys505, Cys510–Cys554, Cys540–Cys567, Cys580–Cys624, Cys610–Cys637, Cys642–Cys686, and Cys672–Cys699. Glu121, Asn123, and Asn124 together coordinate Ca(2+). Asn123 contacts a carbohydrate. A carbohydrate is bound by residues Glu133 and Asn146. 2 residues coordinate Ca(2+): Asn146 and Asp147. Positions 159–195 (YTASCQDMSCSNQGECIETIGSYTCSCYPGFYGPECE) constitute an EGF-like domain. Sushi domains follow at residues 198-259 (KECG…KCDA), 260-321 (VQCQ…TCEA), 322-383 (IACE…FCEA), 384-445 (LQCP…ECQA), 446-507 (VSCA…TCEA), 508-569 (IKCP…TCKG), 578-639 (VRCP…MCRA), and 640-701 (VKCS…TCQA). Asn398 is a glycosylation site (N-linked (GlcNAc...) asparagine). Asn603 carries N-linked (GlcNAc...) asparagine glycosylation. Asn654, Asn661, and Asn679 each carry an N-linked (GlcNAc...) asparagine glycan. A helical transmembrane segment spans residues 710-733 (LTYLGGAVASTTGLAVGGTLLALL). The Cytoplasmic portion of the chain corresponds to 734–768 (RKRLRKKDDGKCPLNPHSHLGTYGVFTNAAYDPTP). Cys745 is lipidated: S-palmitoyl cysteine; alternate. The S-stearoyl cysteine; alternate moiety is linked to residue Cys745. The Endocytosis signal motif lies at 756 to 759 (YGVF). The interaction with SNX17 stretch occupies residues 759 to 768 (FTNAAYDPTP).

This sequence belongs to the selectin/LECAM family. As to quaternary structure, interacts with SNX17. Interacts with SELPLG/PSGL1 and PODXL2 and mediates neutrophil adhesion and leukocyte rolling. This interaction requires the sialyl-Lewis X epitope of SELPLG and PODXL2, and specific tyrosine sulfation on SELPLG. Interacts (via C-type lectin domain) with alpha-IIb/beta3 integrin ITGA2B:ITGB3 and alpha-V/beta-3 integrin ITGAV:ITGB3. Interacts with alpha5/beta1 integrin ITGA5:ITGB1 and alpha4/beta1 integrin ITGA4:ITGB. In terms of tissue distribution, stored in the alpha-granules of platelets and Weibel-Palade bodies of endothelial cells. Upon cell activation by agonists, P-selectin is transported rapidly to the cell surface.

Its subcellular location is the cell membrane. Functionally, ca(2+)-dependent receptor for myeloid cells that binds to carbohydrates on neutrophils and monocytes. Mediates the interaction of activated endothelial cells or platelets with leukocytes. The ligand recognized is sialyl-Lewis X. Mediates rapid rolling of leukocyte rolling over vascular surfaces during the initial steps in inflammation through interaction with SELPLG. Mediates cell-cell interactions and cell adhesion via the interaction with integrin alpha-IIb/beta3 (ITGA2B:ITGB3) and integrin alpha-V/beta-3 (ITGAV:ITGB3). This chain is P-selectin (Selp), found in Mus musculus (Mouse).